The chain runs to 1311 residues: Zinc finger protein 521 (1311 aa).

The segment at 47–67 (HSCDSCLQVFESLSDITEHKI) adopts a C2H2-type 1; degenerate zinc-finger fold. Residues 81 to 108 (DPSCSWPASSPSSKDQTSPSHGEGCDFG) form a disordered region. Low complexity predominate over residues 83–102 (SCSWPASSPSSKDQTSPSHG). 7 C2H2-type zinc fingers span residues 118–140 (YPCQFCDKSFSRLSYLKHHEQSH), 146–168 (FKCTYCSRLFKHKRSRDRHIKLH), 174–196 (YHCSECDAAFSRSDHLKIHLKTH), 202–224 (YKCAVCRRGFLSSSSLHGHMQVH), 246–269 (QKCSQCEEGFDFPEDLQKHIAECH), 281–304 (LQCMYCHELFVEETSLMNHIEQVH), and 310–332 (NSCSICSESFLTVEELYSHMDSH). Positions 357-398 (TTPDSNLSVDSSTMVEAAPPIPKSRGRKRAAQQTSDMTGPSS) are disordered. 2 stretches are compositionally biased toward polar residues: residues 359–370 (PDSNLSVDSSTM) and 387–398 (AQQTSDMTGPSS). The C2H2-type 9; degenerate zinc-finger motif lies at 405–429 (YSCIYCNKQLFSSLAVLQIHLKTMH). 3 C2H2-type zinc fingers span residues 437–460 (HICQYCLEVLPSLYNLNEHLKQVH), 477–500 (YQCNFCSEVVNDLNTLQEHIRCSH), and 513–536 (FFCPHCYMGFLTDSSLEEHIRQVH). Ser546 bears the Phosphoserine mark. The C2H2-type 13; atypical zinc finger occupies 560-585 (YSCSYCTNSPIFNSVLKLNKHIKENH). Residues Ser605 and Ser608 each carry the phosphoserine modification. C2H2-type zinc fingers lie at residues 634-656 (YICNQCGAKYTSLDSFQTHLKTH), 664-686 (LTCPQCNKEFPNQESLLKHVTIH), 694-717 (YICESCDKQFTSVDDLQKHLLDMH), 722-745 (FRCTLCQEVFDSKVSIQLHLAVKH), 752-775 (YRCTSCNWDFRNETDLQLHVKHNH), 783-805 (HKCIFCGESFGTEVELQCHITTH), and 809-832 (YNCRFCSKAFHAVILLEKHLREKH). Residues 863 to 883 (TNSQESHNSHDGSEEDVDSSE) form a disordered region. The C2H2-type 21; degenerate zinc finger occupies 886 to 908 (YGCDICGAAYTMETLLQNHQLRD). C2H2-type zinc fingers lie at residues 930–952 (YKCNVCSRTFFSENGLREHMQTH), 959–981 (YMCPICGERFPSLLTLTEHKVTH), and 1020–1042 (FRCVVCMQTVTSTLELKIHGTFH). A C2H2-type 25; degenerate zinc finger spans residues 1065-1083 (YKCASCLKEFRSKQDLVKL). Positions 1105 to 1119 (PGLSLPPGASRPGLG) are enriched in low complexity. A disordered region spans residues 1105 to 1136 (PGLSLPPGASRPGLGQNESLSAMEGKGKAGGL). C2H2-type zinc fingers lie at residues 1138–1161 (TRCSSCNVKFESESELQNHIQTVH), 1195–1217 (YQCIKCQMVFYNEWDIQVHVANH), 1225–1247 (HECKLCSQTFDSPAKLQCHLIEH), 1256–1279 (FKCPVCFTVFVQANKLQQHIFSAH), and 1286–1309 (YDCTQCPQKFFFQTELQNHTMTQH). Residue Lys1146 forms a Glycyl lysine isopeptide (Lys-Gly) (interchain with G-Cter in SUMO2) linkage.

This sequence belongs to the krueppel C2H2-type zinc-finger protein family. Interacts with EBF1. Interacts with SMAD1 and SMAD4. Widely expressed. Expressed in all B-cell stages.

It localises to the nucleus. Functionally, transcription factor that can both act as an activator or a repressor depending on the context. Involved in BMP signaling and in the regulation of the immature compartment of the hematopoietic system. Associates with SMADs in response to BMP2 leading to activate transcription of BMP target genes. Acts as a transcriptional repressor via its interaction with EBF1, a transcription factor involved specification of B-cell lineage; this interaction preventing EBF1 to bind DNA and activate target genes. This Mus musculus (Mouse) protein is Zinc finger protein 521 (Znf521).